We begin with the raw amino-acid sequence, 405 residues long: Tryptophan synthase beta chain (405 aa).

Lys98 carries the post-translational modification N6-(pyridoxal phosphate)lysine.

This sequence belongs to the TrpB family. As to quaternary structure, tetramer of two alpha and two beta chains. Pyridoxal 5'-phosphate serves as cofactor.

It catalyses the reaction (1S,2R)-1-C-(indol-3-yl)glycerol 3-phosphate + L-serine = D-glyceraldehyde 3-phosphate + L-tryptophan + H2O. The protein operates within amino-acid biosynthesis; L-tryptophan biosynthesis; L-tryptophan from chorismate: step 5/5. Functionally, the beta subunit is responsible for the synthesis of L-tryptophan from indole and L-serine. This is Tryptophan synthase beta chain from Parvibaculum lavamentivorans (strain DS-1 / DSM 13023 / NCIMB 13966).